Consider the following 417-residue polypeptide: Biofilm dispersion protein BdlA (417 aa).

A PAS 1 domain is found at 1–66 (MAALDRSMAR…RRFWERLRRG (66 aa)). Positions 67 to 114 (EHFSGRCKRITREGRPLWLEATYNPVRDGQGRLLKVVKYASDIDAIVH) constitute a PAC 1 domain. A PAS 2 domain is found at 115–188 (QEHEMQSKLD…ADLWRRLNRG (74 aa)). One can recognise a PAC 2 domain in the interval 191–241 (VTGQFRRVHRNGQPVWLEASYNPVYDADGKLYKVVKFASDVSDRMRRYQAE). The Methyl-accepting transducer domain occupies 242–417 (ADNAHQAHTL…QFSRTLNADL (176 aa)).

Functionally, essential for biofilm dispersion by sensing environmental cues. May be involved in sensing and transducing signals within cells, resulting in the modulation of c-di-GMP levels, swimming motility and adhesiveness of the bacterial cell surface. This chain is Biofilm dispersion protein BdlA (bdlA), found in Pseudomonas aeruginosa (strain ATCC 15692 / DSM 22644 / CIP 104116 / JCM 14847 / LMG 12228 / 1C / PRS 101 / PAO1).